The primary structure comprises 431 residues: MNKLENPSQRDVAGPSPRHKTTQVMVGSIAVGGGAPIVVQSMTNTDTADVEGTIAQVAALSRAGSEMVRITVDRDEAAAAVPHIRDGLRKRGIATPLIGDFHYIGHKLLADHPACAEALDKYRINPGNVGFKDKRDKQFTDIVEMAIKYGKAVRIGANWGSLDQELLTHLMEENANSAAPLEARAVTREAMVQSALLSAKRAEEIGLPKNRMILSAKVSAVQDLIAVYQTLASRSDYAIHLGLTEAGMGSKGIVASSAALGILLQQGIGDTIRISLTPEPGGDRTREVQVAQELLQTMGFRTFVPLVAACPGCGRTTSTTFQELARSIQDFIRDEMPGWKTQYPGVEQLNVAVMGCIVNGPGESKHADIGISLPGTGEAPAAPVFVDGKKFRTLRGPAIAQDFKALVIDYIDQRYGSGGKTPTDATTAAAE.

The segment at 1 to 21 (MNKLENPSQRDVAGPSPRHKT) is disordered. The [4Fe-4S] cluster site is built by Cys-310, Cys-313, Cys-356, and Glu-363.

Belongs to the IspG family. [4Fe-4S] cluster serves as cofactor.

The catalysed reaction is (2E)-4-hydroxy-3-methylbut-2-enyl diphosphate + oxidized [flavodoxin] + H2O + 2 H(+) = 2-C-methyl-D-erythritol 2,4-cyclic diphosphate + reduced [flavodoxin]. Its pathway is isoprenoid biosynthesis; isopentenyl diphosphate biosynthesis via DXP pathway; isopentenyl diphosphate from 1-deoxy-D-xylulose 5-phosphate: step 5/6. Converts 2C-methyl-D-erythritol 2,4-cyclodiphosphate (ME-2,4cPP) into 1-hydroxy-2-methyl-2-(E)-butenyl 4-diphosphate. This chain is 4-hydroxy-3-methylbut-2-en-1-yl diphosphate synthase (flavodoxin), found in Nitrobacter hamburgensis (strain DSM 10229 / NCIMB 13809 / X14).